A 459-amino-acid polypeptide reads, in one-letter code: MDLDTITSISTPMGEGAIGIVRLSGPQAVEIADKLYKGKHLLNDVPSHTINYGHIIDPESKEVVEEVMVSVLRAPKTFTREDIIEINCHGGILTINRVLELTMTYGARMAEPGEFTKRAFLNGRIDLSQAEAVMDFIRSKTDRASKVAMNQIEGRLSDLIKKQRQSILEILAQVEVNIDYPEYDDVEDATTEFLLEQSKEIKQEINRLLDTGAQGKIMREGLSTVIVGKPNVGKSSMLNNLIQDNKAIVTEVAGTTRDVLEEYVNVRGVPLRLVDTAGIRETEDIVEKIGVERSRKALSQADLILFVLNNNEALTQEDYTLYEVVKNEDVIVIVNKMDLEQNIDINEVKDMIGDTPLIQTSMLKQEGIDELEIQIRDLFFGGEVQNQDMTYVSNSRHISLLKQARQTIQDAIDAAESGVPMDMVQIDLTRTWEILGEIIGETASDELIDQLFSQFCLGK.

Residues Arg-22, Glu-85, and Arg-124 each contribute to the (6S)-5-formyl-5,6,7,8-tetrahydrofolate site. One can recognise a TrmE-type G domain in the interval 221–380; the sequence is GLSTVIVGKP…LEIQIRDLFF (160 aa). Asn-231 contacts K(+). GTP is bound by residues 231-236, 250-256, and 275-278; these read NVGKSS, TEVAGTT, and DTAG. Ser-235 is a binding site for Mg(2+). Residues Thr-250, Val-252, and Thr-255 each contribute to the K(+) site. Thr-256 is a binding site for Mg(2+). Residue Lys-459 participates in (6S)-5-formyl-5,6,7,8-tetrahydrofolate binding.

Belongs to the TRAFAC class TrmE-Era-EngA-EngB-Septin-like GTPase superfamily. TrmE GTPase family. As to quaternary structure, homodimer. Heterotetramer of two MnmE and two MnmG subunits. K(+) is required as a cofactor.

The protein localises to the cytoplasm. Its function is as follows. Exhibits a very high intrinsic GTPase hydrolysis rate. Involved in the addition of a carboxymethylaminomethyl (cmnm) group at the wobble position (U34) of certain tRNAs, forming tRNA-cmnm(5)s(2)U34. This is tRNA modification GTPase MnmE from Staphylococcus aureus (strain MW2).